Reading from the N-terminus, the 225-residue chain is UPF0758 protein BB3258 (225 aa).

An MPN domain is found at 103 to 225 (ALANPDLVRR…TVSMAAQGHL (123 aa)). Positions 174, 176, and 187 each coordinate Zn(2+). The JAMM motif signature appears at 174–187 (HNHPGGTAAASAAD).

Belongs to the UPF0758 family.

This is UPF0758 protein BB3258 from Bordetella bronchiseptica (strain ATCC BAA-588 / NCTC 13252 / RB50) (Alcaligenes bronchisepticus).